A 229-amino-acid chain; its full sequence is Large ribosomal subunit protein uL1 (229 aa).

Belongs to the universal ribosomal protein uL1 family. Part of the 50S ribosomal subunit.

Functionally, binds directly to 23S rRNA. The L1 stalk is quite mobile in the ribosome, and is involved in E site tRNA release. In terms of biological role, protein L1 is also a translational repressor protein, it controls the translation of the L11 operon by binding to its mRNA. The protein is Large ribosomal subunit protein uL1 of Phytoplasma australiense.